The following is a 539-amino-acid chain: Glucans biosynthesis protein D (539 aa).

The segment at residues 1–31 (MHRRNLLKASMALAAYTGLSASGLLAARAWA) is a signal peptide (tat-type signal).

This sequence belongs to the OpgD/OpgG family. In terms of processing, predicted to be exported by the Tat system. The position of the signal peptide cleavage has not been experimentally proven.

It localises to the periplasm. It functions in the pathway glycan metabolism; osmoregulated periplasmic glucan (OPG) biosynthesis. Probably involved in the control of the structural glucose backbone of osmoregulated periplasmic glucans (OPGs). This is Glucans biosynthesis protein D from Pseudomonas fluorescens (strain ATCC BAA-477 / NRRL B-23932 / Pf-5).